The primary structure comprises 328 residues: tRNA(Ile)-lysidine synthase (328 aa).

35–40 serves as a coordination point for ATP; the sequence is SGGADS.

Belongs to the tRNA(Ile)-lysidine synthase family.

It localises to the cytoplasm. The enzyme catalyses cytidine(34) in tRNA(Ile2) + L-lysine + ATP = lysidine(34) in tRNA(Ile2) + AMP + diphosphate + H(+). Functionally, ligates lysine onto the cytidine present at position 34 of the AUA codon-specific tRNA(Ile) that contains the anticodon CAU, in an ATP-dependent manner. Cytidine is converted to lysidine, thus changing the amino acid specificity of the tRNA from methionine to isoleucine. In Polaromonas naphthalenivorans (strain CJ2), this protein is tRNA(Ile)-lysidine synthase.